The primary structure comprises 167 residues: uncharacterized protein (167 aa).

Positions 28–59 (LTGIREELKADIDETRLIAESVLEEKEKKVVE) form a coiled coil.

This is an uncharacterized protein from Aquifex aeolicus (strain VF5).